A 176-amino-acid polypeptide reads, in one-letter code: Lipoprotein signal peptidase (176 aa).

4 helical membrane passes run 10 to 30 (LFQFYPHNLIWLGLSVLAIVL), 48 to 68 (VPVLPFLNWTLLHNYGAAFSF), 78 to 98 (YFFTSLAGLVSILFVFWLLRM), and 102 to 122 (MVVLPVAIALILGGALGNLID). Active-site residues include D131 and D149. The helical transmembrane segment at 141 to 161 (HFPAFNIADSAITLGTILLLI) threads the bilayer.

This sequence belongs to the peptidase A8 family.

The protein resides in the cell inner membrane. The enzyme catalyses Release of signal peptides from bacterial membrane prolipoproteins. Hydrolyzes -Xaa-Yaa-Zaa-|-(S,diacylglyceryl)Cys-, in which Xaa is hydrophobic (preferably Leu), and Yaa (Ala or Ser) and Zaa (Gly or Ala) have small, neutral side chains.. Its pathway is protein modification; lipoprotein biosynthesis (signal peptide cleavage). This protein specifically catalyzes the removal of signal peptides from prolipoproteins. In Acinetobacter baumannii (strain SDF), this protein is Lipoprotein signal peptidase.